Consider the following 241-residue polypeptide: MQCFSFIKTMMILFNLLIFLCGAALLAVGIWVSIDGASFLKIFGPLSSSAMQFVNVGYFLIAAGVVVFALGFLGCYGAKTESKCALVTFFFILLLIFIAEVAAAVVALVYTTMAEHFLTLLVVPAIKKDYGSQEDFTQVWNTTMKGLKCCGFTNYTDFEDSPYFKENSAFPPFCCNDNVTNTANETCTKQKAHDQKVEGCFNQLLYDIRTNAVTVGGVAAGIGGLELAAMIVSMYLYCNLQ.

At 1–11 the chain is on the cytoplasmic side; the sequence is MQCFSFIKTMM. A helical transmembrane segment spans residues 12-32; sequence ILFNLLIFLCGAALLAVGIWV. Over 33–52 the chain is Extracellular; the sequence is SIDGASFLKIFGPLSSSAMQ. A helical membrane pass occupies residues 53 to 73; it reads FVNVGYFLIAAGVVVFALGFL. The Cytoplasmic portion of the chain corresponds to 74 to 88; it reads GCYGAKTESKCALVT. The chain crosses the membrane as a helical span at residues 89–109; that stretch reads FFFILLLIFIAEVAAAVVALV. Topologically, residues 110-211 are extracellular; it reads YTTMAEHFLT…NQLLYDIRTN (102 aa). N-linked (GlcNAc...) asparagine glycosylation is found at Asn141, Asn154, Asn178, and Asn184. The chain crosses the membrane as a helical span at residues 212–232; it reads AVTVGGVAAGIGGLELAAMIV. Residues 233-241 are Cytoplasmic-facing; it reads SMYLYCNLQ.

Belongs to the tetraspanin (TM4SF) family. Interacts with SLC19A2. Interacts with NTRK1/TRKA.

It localises to the cell membrane. The protein localises to the lysosome membrane. Its function is as follows. Structural component of specialized membrane microdomains known as tetraspanin-enriched microdomains (TERMs), which act as platforms for receptor clustering and signaling. Participates thereby in diverse biological functions such as cell signal transduction, adhesion, migration and protein trafficking. Regulates neuronal differentiation in response to NGF by facilitating NGF-mediated activation of NTRK1/TRKA receptor tyrosine kinase and subsequent downstream signaling pathways. Plays a role in the inhibition of TNFalpha-induced apoptosis. Mechanistically, inhibits the NF-kappa-B signaling pathway by blocking phosphorylation of CHUK. Also promotes the stability of the thiamine transporter 1/SLC19A2 in intestinal epithelial cells leading to an increase of thiamine uptake process. This chain is Tetraspanin-1 (TSPAN1), found in Homo sapiens (Human).